Reading from the N-terminus, the 909-residue chain is Cutinase transcription factor 1 alpha (909 aa).

The disordered stretch occupies residues 1–51 (MSSGDAPPQAQPQPHQQEQPNQRQSSTPAPSAAPVPPAPSTSTSNSAGGVS). The span at 12-30 (PQPHQQEQPNQRQSSTPAP) shows a compositional bias: low complexity. Residues 61–90 (CETCHARKVRCDAASLGVPCTNCVAFQIEC) constitute a DNA-binding region (zn(2)-C6 fungal-type). Disordered regions lie at residues 95–159 (PKRK…EAQA), 651–757 (AEGK…SFSV), and 841–878 (LPQGFQGHTNMWQPNLDPNLPEGQSPDSWSSTSGQGQA). Residues 110–119 (KDSDSDRGDG) are compositionally biased toward basic and acidic residues. The segment covering 142–156 (VFHSHNGTPPTTLTE) has biased composition (polar residues). The segment covering 669 to 683 (QHSRQQEAPKRKYDE) has biased composition (basic and acidic residues). 3 stretches are compositionally biased toward polar residues: residues 704–717 (PQTPSAVKAETSSM), 737–755 (GGTNSRPQTRPATPFNPSF), and 865–878 (SPDSWSSTSGQGQA).

The protein localises to the nucleus. The chain is Cutinase transcription factor 1 alpha (CTF1-ALPHA) from Fusarium vanettenii (Neocosmospora pisi).